Consider the following 492-residue polypeptide: 3-octaprenyl-4-hydroxybenzoate carboxy-lyase (492 aa).

Asparagine 175 contributes to the Mn(2+) binding site. Prenylated FMN contacts are provided by residues 178–180 (IYR), 192–194 (RWL), and 197–198 (RG). Residue glutamate 241 coordinates Mn(2+). Aspartate 290 functions as the Proton donor in the catalytic mechanism.

It belongs to the UbiD family. Homohexamer. It depends on prenylated FMN as a cofactor. Mn(2+) serves as cofactor.

It is found in the cell membrane. The enzyme catalyses a 4-hydroxy-3-(all-trans-polyprenyl)benzoate + H(+) = a 2-(all-trans-polyprenyl)phenol + CO2. Its pathway is cofactor biosynthesis; ubiquinone biosynthesis. Catalyzes the decarboxylation of 3-octaprenyl-4-hydroxy benzoate to 2-octaprenylphenol, an intermediate step in ubiquinone biosynthesis. This chain is 3-octaprenyl-4-hydroxybenzoate carboxy-lyase, found in Salmonella typhi.